Consider the following 260-residue polypeptide: MWFLALCLAMSLGWTGAEPHFQPRIIGGRECLKNSQPWQVAVYHNGEFACGGVLVNPEWVLTAAHCANSNCEVWLGRHNLSESEDEGQLVQVRKSFIHPLYKTKVPRAVIRPGEDRSHDLMLLHLEEPAKITKAVRVMDLPKKEPPLGSTCYVSGWGSTDPETIFHPGSLQCVDLKLLSNNQCAKVYTQKVTKFMLCAGVLEGKKDTCKGDSGGPLICDGELVGITSWGATPCGKPQMPSLYTRVMPHLMWIKDTMKANT.

A signal peptide spans 1 to 17; sequence MWFLALCLAMSLGWTGA. The propeptide at 18-24 is activation peptide; it reads EPHFQPR. Positions 25-257 constitute a Peptidase S1 domain; the sequence is IIGGRECLKN…HLMWIKDTMK (233 aa). Intrachain disulfides connect C31-C172, C50-C66, C151-C218, C183-C197, and C208-C233. H65 (charge relay system) is an active-site residue. N-linked (GlcNAc...) asparagine glycosylation is present at N79. Catalysis depends on D119, which acts as the Charge relay system. Catalysis depends on S212, which acts as the Charge relay system.

Belongs to the peptidase S1 family. Kallikrein subfamily.

The catalysed reaction is Preferential cleavage of Arg-|-Xaa bonds in small molecule substrates. Highly selective action to release kallidin (lysyl-bradykinin) from kininogen involves hydrolysis of Met-|-Xaa or Leu-|-Xaa.. Its function is as follows. This serine protease is found in dog seminal plasma, its exact physiological function is not known. The polypeptide is Arginine esterase (Canis lupus familiaris (Dog)).